Here is a 674-residue protein sequence, read N- to C-terminus: DNA ligase (674 aa).

NAD(+)-binding positions include 35 to 39, 82 to 83, and E116; these read DAEYD and SL. The active-site N6-AMP-lysine intermediate is the K118. Positions 139, 174, 282, and 306 each coordinate NAD(+). The Zn(2+) site is built by C400, C403, C418, and C424. A BRCT domain is found at 593–674; it reads SYVSLIHGKT…WLQYIQPNKV (82 aa).

This sequence belongs to the NAD-dependent DNA ligase family. LigA subfamily. Requires Mg(2+) as cofactor. The cofactor is Mn(2+).

The catalysed reaction is NAD(+) + (deoxyribonucleotide)n-3'-hydroxyl + 5'-phospho-(deoxyribonucleotide)m = (deoxyribonucleotide)n+m + AMP + beta-nicotinamide D-nucleotide.. DNA ligase that catalyzes the formation of phosphodiester linkages between 5'-phosphoryl and 3'-hydroxyl groups in double-stranded DNA using NAD as a coenzyme and as the energy source for the reaction. It is essential for DNA replication and repair of damaged DNA. The chain is DNA ligase from Ehrlichia ruminantium (strain Welgevonden).